Reading from the N-terminus, the 480-residue chain is Probable serine/threonine-protein phosphatase 2A regulatory subunit B'' subunit TON2 (480 aa).

EF-hand domains lie at Val186 to Asn221, Thr294 to Glu329, and Asp369 to Lys404. Positions 307, 309, 311, 313, and 318 each coordinate Ca(2+).

Interacts with PP2AA1. Widely expressed.

It is found in the cytoplasm. Its subcellular location is the cytoskeleton. Functionally, probable regulatory subunit of type 2A protein phosphatase involved in the control of the dynamic organization of the cortical cytoskeleton. Plays an important role in the organization of interphase microtubule arrays in part through the regulation of nucleation geometry. Required for the reorganization of cortical arrays in response to light. The chain is Probable serine/threonine-protein phosphatase 2A regulatory subunit B'' subunit TON2 (TON2) from Arabidopsis thaliana (Mouse-ear cress).